The chain runs to 1224 residues: MKPRARGWRGLAALWMLLAQVAEQAPACAMGPAAAAPGSPSVPRPPPPAERPGWMEKGEYDLVSAYEVDHRGDYVSHEIMHHQRRRRAVPVSEVESLHLRLKGSRHDFHMDLRTSSSLVAPGFIVQTLGKTGTKSVQTLPPEDFCFYQGSLRSHRNSSVALSTCQGLSGMIRTEEADYFLRPLPSHLSWKLGRAAQGSSPSHVLYKRSTEPHAPGASEVLVTSRTWELAHQPLHSSDLRLGLPQKQHFCGRRKKYMPQPPKEDLFILPDEYKSCLRHKRSLLRSHRNEELNVETLVVVDKKMMQNHGHENITTYVLTILNMVSALFKDGTIGGNINIAIVGLILLEDEQPGLVISHHADHTLSSFCQWQSGLMGKDGTRHDHAILLTGLDICSWKNEPCDTLGFAPISGMCSKYRSCTINEDTGLGLAFTIAHESGHNFGMIHDGEGNMCKKSEGNIMSPTLAGRNGVFSWSPCSRQYLHKFLSTAQAICLADQPKPVKEYKYPEKLPGELYDANTQCKWQFGEKAKLCMLDFKKDICKALWCHRIGRKCETKFMPAAEGTICGHDMWCRGGQCVKYGDEGPKPTHGHWSDWSSWSPCSRTCGGGVSHRSRLCTNPKPSHGGKFCEGSTRTLKLCNSQKCPRDSVDFRAAQCAEHNSRRFRGRHYKWKPYTQVEDQDLCKLYCIAEGFDFFFSLSNKVKDGTPCSEDSRNVCIDGICERVGCDNVLGSDAVEDVCGVCNGNNSACTIHRGLYTKHHHTNQYYHMVTIPSGARSIRIYEMNVSTSYISVRNALRRYYLNGHWTVDWPGRYKFSGTTFDYRRSYNEPENLIATGPTNETLIVELLFQGRNPGVAWEYSMPRLGTEKQPPAQPSYTWAIVRSECSVSCGGGQMTVREGCYRDLKFQVNMSFCNPKTRPVTGLVPCKVSACPPSWSVGNWSACSRTCGGGAQSRPVQCTRRVHYDSEPVPASLCPQPAPSSRQACNSQSCPPAWSAGPWAECSHTCGKGWRKRAVACKSTNPSARAQLLPDAVCTSEPKPRMHEACLLQRCHKPKKLQWLVSAWSQCSVTCERGTQKRFLKCAEKYVSGKYRELASKKCSHLPKPSLELERACAPLPCPRHPPFAAAGPSRGSWFASPWSQCTASCGGGVQTRSVQCLAGGRPASGCLLHQKPSASLACNTHFCPIAEKKDAFCKDYFHWCYLVPQHGMCSHKFYGKQCCKTCSKSNL.

Residues 1-24 (MKPRARGWRGLAALWMLLAQVAEQ) form the signal peptide. A propeptide spanning residues 25-279 (APACAMGPAA…EYKSCLRHKR (255 aa)) is cleaved from the precursor. Residues 31-53 (GPAAAAPGSPSVPRPPPPAERPG) form a disordered region. Residues 40–50 (PSVPRPPPPAE) show a composition bias toward pro residues. A glycan (N-linked (GlcNAc...) asparagine) is linked at asparagine 156. The Cysteine switch signature appears at 247 to 254 (HFCGRRKK). Zn(2+) is bound at residue cysteine 249. Positions 290–495 (LNVETLVVVD…AQAICLADQP (206 aa)) constitute a Peptidase M12B domain. Asparagine 310 is a glycosylation site (N-linked (GlcNAc...) asparagine). 11 cysteine pairs are disulfide-bonded: cysteine 366–cysteine 417, cysteine 392–cysteine 399, cysteine 411–cysteine 490, cysteine 450–cysteine 474, cysteine 518–cysteine 543, cysteine 529–cysteine 550, cysteine 538–cysteine 569, cysteine 563–cysteine 574, cysteine 598–cysteine 635, cysteine 602–cysteine 640, and cysteine 613–cysteine 625. Histidine 433 contributes to the Zn(2+) binding site. Glutamate 434 is an active-site residue. 2 residues coordinate Zn(2+): histidine 437 and histidine 443. Positions 496–585 (KPVKEYKYPE…KYGDEGPKPT (90 aa)) constitute a Disintegrin domain. Positions 586-641 (HGHWSDWSSWSPCSRTCGGGVSHRSRLCTNPKPSHGGKFCEGSTRTLKLCNSQKCP) constitute a TSP type-1 1 domain. Residues asparagine 741, asparagine 780, asparagine 835, asparagine 905, and asparagine 935 are each glycosylated (N-linked (GlcNAc...) asparagine). Positions 747–873 (IHRGLYTKHH…KQPPAQPSYT (127 aa)) are spacer. 5 consecutive TSP type-1 domains span residues 874–922 (WAIV…LVPC), 927–987 (CPPS…QSCP), 988–1048 (PAWS…QRCH), 1051–1115 (KKLQ…LPCP), and 1127–1181 (RGSW…HFCP). Cystine bridges form between cysteine 939/cysteine 981, cysteine 943/cysteine 986, and cysteine 954/cysteine 970. A PLAC domain is found at 1186–1223 (KDAFCKDYFHWCYLVPQHGMCSHKFYGKQCCKTCSKSN).

Zn(2+) serves as cofactor. In terms of processing, the precursor is cleaved by a furin endopeptidase. Post-translationally, glycosylated. Can be O-fucosylated by POFUT2 on a serine or a threonine residue found within the consensus sequence C1-X(2)-(S/T)-C2-G of the TSP type-1 repeat domains where C1 and C2 are the first and second cysteine residue of the repeat, respectively. Fucosylated repeats can then be further glycosylated by the addition of a beta-1,3-glucose residue by the glucosyltransferase, B3GALTL. Fucosylation mediates the efficient secretion of ADAMTS family members. Can also be C-glycosylated with one or two mannose molecules on tryptophan residues within the consensus sequence W-X-X-W of the TPRs, and N-glycosylated. These other glycosylations can also facilitate secretion. Expressed in fetal lung and kidney and in adult prostate and ovary.

The protein resides in the secreted. Its subcellular location is the extracellular space. It localises to the extracellular matrix. This Homo sapiens (Human) protein is A disintegrin and metalloproteinase with thrombospondin motifs 16 (ADAMTS16).